The following is a 397-amino-acid chain: Phosphoglycerate kinase (397 aa).

Substrate contacts are provided by residues 25–27, Arg41, 64–67, Arg118, and Arg151; these read DLN and HLGR. ATP is bound by residues Lys202, Glu324, and 350 to 353; that span reads GGDT.

This sequence belongs to the phosphoglycerate kinase family. Monomer.

The protein resides in the cytoplasm. It catalyses the reaction (2R)-3-phosphoglycerate + ATP = (2R)-3-phospho-glyceroyl phosphate + ADP. Its pathway is carbohydrate degradation; glycolysis; pyruvate from D-glyceraldehyde 3-phosphate: step 2/5. In Janthinobacterium sp. (strain Marseille) (Minibacterium massiliensis), this protein is Phosphoglycerate kinase.